Here is a 205-residue protein sequence, read N- to C-terminus: Holliday junction resolvase RecU (205 aa).

Positions 1 to 22 are disordered; sequence MAINYPAGTRRRTAQAKNTMRT. 4 residues coordinate Mg(2+): Thr-90, Asp-92, Asp-105, and Gln-124.

Belongs to the RecU family. The cofactor is Mg(2+).

The protein resides in the cytoplasm. The catalysed reaction is Endonucleolytic cleavage at a junction such as a reciprocal single-stranded crossover between two homologous DNA duplexes (Holliday junction).. Functionally, endonuclease that resolves Holliday junction intermediates in genetic recombination. Cleaves mobile four-strand junctions by introducing symmetrical nicks in paired strands. Promotes annealing of linear ssDNA with homologous dsDNA. Required for DNA repair, homologous recombination and chromosome segregation. This chain is Holliday junction resolvase RecU, found in Leuconostoc citreum (strain KM20).